A 118-amino-acid chain; its full sequence is Non-specific lipid-transfer protein 1 (118 aa).

The signal sequence occupies residues 1-25 (MASLRVSCLVALMCMVVISAPMAEA). Cystine bridges form between cysteine 29-cysteine 76, cysteine 39-cysteine 53, cysteine 54-cysteine 99, and cysteine 74-cysteine 113.

The protein belongs to the plant LTP family.

Functionally, plant non-specific lipid-transfer proteins transfer phospholipids as well as galactolipids across membranes. May play a role in wax or cutin deposition in the cell walls of expanding epidermal cells and certain secretory tissues. This is Non-specific lipid-transfer protein 1 from Lens culinaris (Lentil).